Consider the following 702-residue polypeptide: BRCA1-associated RING domain protein 1 (702 aa).

Residues 18-67 (CVKCKKPRGDLQYLGSSCKHAYCWECIATFQQKPSGKRSSVARHMCPSCA) form an RING-type zinc finger. Disordered regions lie at residues 153 to 205 (DENR…TSVK) and 281 to 346 (ASMS…YGTR). The span at 174 to 188 (ASPTRNSTKRPSTVS) shows a compositional bias: polar residues. Positions 312 to 321 (IKSDKIERRS) are enriched in basic and acidic residues. ANK repeat units follow at residues 347–376 (RGEA…CVNE), 379–408 (DGKT…VINA), and 413–442 (TLET…SIKI). One can recognise a BRCT domain in the interval 601–702 (MQPKLFAGCK…LGCSITTPPH (102 aa)).

As to quaternary structure, heterodimer (via RING-type zinc finger) with brc-1 to form the core CeBCD complex. Brc-1-brd-1 heterodimer-containing CeBCD complexes bound to chromatin are activated as an E3-ubiquitin ligase in response to DNA damage. The heterodimer interacts with the recombinase rad-51 following ionizing irradiation; the interaction is direct. The heterodimer interacts the E2-ubiquitin-conjugating enzyme let-70 following ionizing irradiation. The heterodimer interacts with the pro-crossover proteins msh-5 and syp-3. Interacts with smt-3, tac-1 and ubc-9. In terms of processing, autoubiquitinated. Phosphorylation of CeBCD complexes is required for E3 ubiquitin-protein ligase activity.

Its subcellular location is the cytoplasm. It localises to the nucleus. The protein localises to the chromosome. The catalysed reaction is S-ubiquitinyl-[E2 ubiquitin-conjugating enzyme]-L-cysteine + [acceptor protein]-L-lysine = [E2 ubiquitin-conjugating enzyme]-L-cysteine + N(6)-ubiquitinyl-[acceptor protein]-L-lysine.. It participates in protein modification; protein ubiquitination. With respect to regulation, E3 ubiquitin-protein ligase activity of CeBCD complexes occurs at DNA damage sites. Following DNA damage, E3 ubiquitin-protein ligase activity is reduced by caffeine treatment (inhibitor of ATM and ATK kinase activity). Its function is as follows. Constituent of the CeBCD complex that possesses E3 ubiquitin-protein ligase activity. When bound to chromatin, the brc-1-brd-1 heterodimer within the CeBCD complex is inactive during normal conditions, but in response to DNA damage, the brc-1-brd-1 heterodimer associates with other proteins such as the recombinase rad-51 or the E2-ubiquitin-conjugating enzyme let-70, which activate the CeBCD complex as an E3-ubiquitin ligase. Moreover, association between the brc-1-brd-1 heterodimer and rad-51 and let-70, probably requires DNA checkpoint proteins such as atl-1 and mre-11 in order to induce ubiquitination at DNA damage sites. To this end, the brc-1-brd-1 heterodimer coordinates a diverse range of cellular pathways such as DNA damage repair, ubiquitination and transcriptional regulation to maintain genomic stability. Plays a role in triggering cellular responses at damage sites in response to DNA damage that may be induced by ionizing radiation for example. In particular, protects against chromosome non-disjunction and nuclear fragmentation during meiotic double-strand break repair to ensure sister chromatid recombination and aid chromosome stability. The polypeptide is BRCA1-associated RING domain protein 1 (Caenorhabditis elegans).